Here is a 980-residue protein sequence, read N- to C-terminus: Chitin binding domain containing chtb-2 (980 aa).

A signal peptide spans 1 to 20; that stretch reads MRTMHCFLFILLFCLGQVFT. 2 N-linked (GlcNAc...) asparagine glycosylation sites follow: Asn187 and Asn190. Disordered stretches follow at residues 310-354, 431-451, and 486-512; these read ERQQ…AELD, QEEERQRKIQQQKVEMEQIRQ, and EILRQQEEDQKKKKLEKDREQREQQEA. N-linked (GlcNAc...) asparagine glycosylation is found at Asn941 and Asn975.

This chain is Chitin binding domain containing chtb-2, found in Caenorhabditis elegans.